Reading from the N-terminus, the 947-residue chain is Valine--tRNA ligase (947 aa).

The 'HIGH' region motif lies at 45–55; that stretch reads PNVTGSLHMGH. The 'KMSKS' region motif lies at 591–595; that stretch reads KMSKS. Lysine 594 serves as a coordination point for ATP. Residues 879-943 adopt a coiled-coil conformation; that stretch reads DLAAEQARLE…ASLRTALTRV (65 aa).

It belongs to the class-I aminoacyl-tRNA synthetase family. ValS type 1 subfamily. Monomer.

The protein localises to the cytoplasm. The catalysed reaction is tRNA(Val) + L-valine + ATP = L-valyl-tRNA(Val) + AMP + diphosphate. Functionally, catalyzes the attachment of valine to tRNA(Val). As ValRS can inadvertently accommodate and process structurally similar amino acids such as threonine, to avoid such errors, it has a 'posttransfer' editing activity that hydrolyzes mischarged Thr-tRNA(Val) in a tRNA-dependent manner. The polypeptide is Valine--tRNA ligase (Agrobacterium fabrum (strain C58 / ATCC 33970) (Agrobacterium tumefaciens (strain C58))).